A 614-amino-acid chain; its full sequence is UvrABC system protein C (614 aa).

One can recognise a GIY-YIG domain in the interval 26–104 (NLPGVYKMLG…IKEYRPPYNV (79 aa)). Positions 215–250 (SDIHSALIEKMEASAEELDFEKAVFYRDQLSMLREV) constitute a UVR domain.

Belongs to the UvrC family. As to quaternary structure, interacts with UvrB in an incision complex.

The protein localises to the cytoplasm. The UvrABC repair system catalyzes the recognition and processing of DNA lesions. UvrC both incises the 5' and 3' sides of the lesion. The N-terminal half is responsible for the 3' incision and the C-terminal half is responsible for the 5' incision. The polypeptide is UvrABC system protein C (Psychrobacter arcticus (strain DSM 17307 / VKM B-2377 / 273-4)).